Reading from the N-terminus, the 190-residue chain is Xanthine phosphoribosyltransferase 2 (190 aa).

Xanthine-binding residues include Leu-20 and Asn-27. Residue Ala-129–Ala-133 participates in 5-phospho-alpha-D-ribose 1-diphosphate binding. Xanthine is bound at residue Lys-157.

Belongs to the purine/pyrimidine phosphoribosyltransferase family. Xpt subfamily. In terms of assembly, homodimer.

It is found in the cytoplasm. The catalysed reaction is XMP + diphosphate = xanthine + 5-phospho-alpha-D-ribose 1-diphosphate. It participates in purine metabolism; XMP biosynthesis via salvage pathway; XMP from xanthine: step 1/1. Converts the preformed base xanthine, a product of nucleic acid breakdown, to xanthosine 5'-monophosphate (XMP), so it can be reused for RNA or DNA synthesis. The sequence is that of Xanthine phosphoribosyltransferase 2 from Clostridium botulinum (strain Langeland / NCTC 10281 / Type F).